The sequence spans 412 residues: Gamma-glutamyl phosphate reductase (412 aa).

This sequence belongs to the gamma-glutamyl phosphate reductase family.

The protein resides in the cytoplasm. It catalyses the reaction L-glutamate 5-semialdehyde + phosphate + NADP(+) = L-glutamyl 5-phosphate + NADPH + H(+). It functions in the pathway amino-acid biosynthesis; L-proline biosynthesis; L-glutamate 5-semialdehyde from L-glutamate: step 2/2. Functionally, catalyzes the NADPH-dependent reduction of L-glutamate 5-phosphate into L-glutamate 5-semialdehyde and phosphate. The product spontaneously undergoes cyclization to form 1-pyrroline-5-carboxylate. This is Gamma-glutamyl phosphate reductase from Nitratiruptor sp. (strain SB155-2).